The chain runs to 557 residues: Urocanate hydratase (557 aa).

Positions 1–20 (MSNPRHNEREVRSPRGDELN) are disordered. NAD(+)-binding positions include 52-53 (GG), Gln-130, 176-178 (GMG), Glu-196, Arg-201, 242-243 (NA), 263-267 (QTSAH), 273-274 (YL), and Tyr-322. Cys-410 is a catalytic residue. Residue Gly-492 participates in NAD(+) binding.

It belongs to the urocanase family. The cofactor is NAD(+).

The protein localises to the cytoplasm. It carries out the reaction 4-imidazolone-5-propanoate = trans-urocanate + H2O. It participates in amino-acid degradation; L-histidine degradation into L-glutamate; N-formimidoyl-L-glutamate from L-histidine: step 2/3. Functionally, catalyzes the conversion of urocanate to 4-imidazolone-5-propionate. The chain is Urocanate hydratase from Brucella melitensis biotype 2 (strain ATCC 23457).